The sequence spans 362 residues: mRNA decay activator protein ZFP36L2 (362 aa).

Residues 100–109 (SFSENGERSQ) show a composition bias toward basic and acidic residues. The tract at residues 100–126 (SFSENGERSQHLLHLQQQQQQKAGAQV) is disordered. Positions 111–120 (LLHLQQQQQQ) are enriched in low complexity. The RNA-binding motif lies at 130-135 (RYKTEL). C3H1-type zinc fingers lie at residues 130–158 (RYKT…HGFH) and 168–196 (KYKT…HNAE). The tract at residues 147-188 (YGEKCQFAHGFHELRSLTRHPKYKTELCRTFHTIGFCPYGPR) is RNA-binding. 2 disordered regions span residues 225–244 (DSPL…SSSS) and 306–362 (SESP…ISDD). Low complexity predominate over residues 327–346 (YLSGSLSSGSLSGSDSPTLD).

Phosphorylated.

Its subcellular location is the nucleus. The protein resides in the cytoplasm. Its function is as follows. Zinc-finger RNA-binding protein that destabilizes several cytoplasmic AU-rich element (ARE)-containing mRNA transcripts by promoting their poly(A) tail removal or deadenylation, and hence provide a mechanism for attenuating protein synthesis. Acts as a 3'-untranslated region (UTR) ARE mRNA-binding adapter protein to communicate signaling events to the mRNA decay machinery. Functions by recruiting the CCR4-NOT deadenylase complex and probably other components of the cytoplasmic RNA decay machinery to the bound ARE-containing mRNAs, and hence promotes ARE-mediated mRNA deadenylation and decay processes. Binds to 3'-UTR ARE of numerous mRNAs. Also induces the degradation of ARE-containing mRNAs even in absence of poly(A) tail. Required for tubulogenesis during pronephros development. This is mRNA decay activator protein ZFP36L2 (zfp36l2) from Xenopus tropicalis (Western clawed frog).